We begin with the raw amino-acid sequence, 366 residues long: Ribosomal RNA large subunit methyltransferase M (366 aa).

Residues Ser188, 221 to 224, Asp240, Asp260, and Asp277 each bind S-adenosyl-L-methionine; that span reads CPGG. Residue Lys306 is the Proton acceptor of the active site.

The protein belongs to the class I-like SAM-binding methyltransferase superfamily. RNA methyltransferase RlmE family. RlmM subfamily. In terms of assembly, monomer.

Its subcellular location is the cytoplasm. The enzyme catalyses cytidine(2498) in 23S rRNA + S-adenosyl-L-methionine = 2'-O-methylcytidine(2498) in 23S rRNA + S-adenosyl-L-homocysteine + H(+). Functionally, catalyzes the 2'-O-methylation at nucleotide C2498 in 23S rRNA. This is Ribosomal RNA large subunit methyltransferase M from Escherichia fergusonii (strain ATCC 35469 / DSM 13698 / CCUG 18766 / IAM 14443 / JCM 21226 / LMG 7866 / NBRC 102419 / NCTC 12128 / CDC 0568-73).